Reading from the N-terminus, the 217-residue chain is Ribulose-phosphate 3-epimerase (217 aa).

Ser6 serves as a coordination point for substrate. 3 residues coordinate a divalent metal cation: His29, Asp31, and His62. Asp31 (proton acceptor) is an active-site residue. Substrate contacts are provided by residues His62, Gly138 to Gly141, Asp171 to Gly173, and Gly193 to Ser194. Asp171 serves as a coordination point for a divalent metal cation. Residue Asp171 is the Proton donor of the active site.

It belongs to the ribulose-phosphate 3-epimerase family. It depends on a divalent metal cation as a cofactor.

It catalyses the reaction D-ribulose 5-phosphate = D-xylulose 5-phosphate. Its pathway is carbohydrate degradation. Functionally, catalyzes the reversible epimerization of D-ribulose 5-phosphate to D-xylulose 5-phosphate. This Helicobacter pylori (strain J99 / ATCC 700824) (Campylobacter pylori J99) protein is Ribulose-phosphate 3-epimerase.